A 435-amino-acid chain; its full sequence is Glutamate-1-semialdehyde 2,1-aminomutase (435 aa).

Lysine 266 bears the N6-(pyridoxal phosphate)lysine mark.

Belongs to the class-III pyridoxal-phosphate-dependent aminotransferase family. HemL subfamily. As to quaternary structure, homodimer. It depends on pyridoxal 5'-phosphate as a cofactor.

The protein localises to the cytoplasm. It catalyses the reaction (S)-4-amino-5-oxopentanoate = 5-aminolevulinate. It participates in porphyrin-containing compound metabolism; protoporphyrin-IX biosynthesis; 5-aminolevulinate from L-glutamyl-tRNA(Glu): step 2/2. This chain is Glutamate-1-semialdehyde 2,1-aminomutase, found in Coxiella burnetii (strain CbuK_Q154) (Coxiella burnetii (strain Q154)).